Consider the following 215-residue polypeptide: Ceramide-1-phosphate transfer protein (215 aa).

Residues Asp-57, Lys-61, Arg-107, Arg-111, and His-151 each coordinate an N-acylsphingoid base 1-phosphate.

It belongs to the GLTP family.

It localises to the cytoplasm. It is found in the cytosol. The protein resides in the golgi apparatus. Its subcellular location is the trans-Golgi network membrane. The protein localises to the cell membrane. It localises to the endosome membrane. It is found in the nucleus outer membrane. It catalyses the reaction N-(hexadecanoyl)-sphing-4-enine-1-phosphate(in) = N-(hexadecanoyl)-sphing-4-enine-1-phosphate(out). It carries out the reaction N-(9Z-octadecenoyl)-sphing-4-enine-1-phosphate(in) = N-(9Z-octadecenoyl)-sphing-4-enine-1-phosphate(out). Functionally, mediates the intracellular transfer of ceramide-1-phosphate (C1P) between organelle membranes and the cell membrane. Required for normal structure of the Golgi stacks. Can bind phosphoceramides with a variety of aliphatic chains, but has a preference for lipids with saturated C16:0 or monounsaturated C18:1 aliphatic chains, and is inefficient with phosphoceramides containing lignoceryl (C24:0). Plays a role in the regulation of the cellular levels of ceramide-1-phosphate, and thereby contributes to the regulation of phospholipase PLA2G4A activity and the release of arachidonic acid. Has no activity with galactosylceramide, lactosylceramide, sphingomyelin, phosphatidylcholine, phosphatidic acid and ceramide. C1P transfer is stimulated by phosphatidylserine in C1P source vesicles. Regulates autophagy and pyroptosis, but not apoptosis. This chain is Ceramide-1-phosphate transfer protein (cptp), found in Xenopus tropicalis (Western clawed frog).